The primary structure comprises 297 residues: Adrenocorticotropic hormone receptor (297 aa).

The Extracellular portion of the chain corresponds to 1-23 (MKHITDLYESVNSTMSNKSDCPP). N-linked (GlcNAc...) asparagine glycans are attached at residues asparagine 12 and asparagine 17. Cystine bridges form between cysteine 21-cysteine 253 and cysteine 245-cysteine 251. The chain crosses the membrane as a helical span at residues 24 to 49 (VVLPEEVFFTISVIGVLENLIVLLAV). Over 50 to 58 (IKNKNLQSP) the chain is Cytoplasmic. Residues 59–79 (MYFFICSLAISDMLGSLYKIL) form a helical membrane-spanning segment. The Extracellular segment spans residues 80–104 (ENILIIFRNMGYLEPRGGFESTADD). The helical transmembrane segment at 105-126 (VVDSLFILSLLGSICSLSAIAA) threads the bilayer. Residues 127-147 (DRYITIFHALQYQRLVTPRRA) lie on the Cytoplasmic side of the membrane. Residues 148–168 (AVVLLIIWACCIGSGITIVTF) traverse the membrane as a helical segment. Topologically, residues 169-180 (SHHVPAVIAFTA) are extracellular. The helical transmembrane segment at 181-199 (LFPLMLVFILCLYGHMFLL) threads the bilayer. Residues 200-217 (ARSHARRVSTLPRANMKG) lie on the Cytoplasmic side of the membrane. The helical transmembrane segment at 218–244 (AITLTVLLGVFIFCWAPFVLHILLMTF) threads the bilayer. Residues 245-256 (CPADPYCACYLA) are Extracellular-facing. Residues 257–278 (LFQVNAVLIMCNAIIDPFIYAF) form a helical membrane-spanning segment. Over 279-297 (RSPELRDAFKKMIICKRYP) the chain is Cytoplasmic. Cysteine 293 is lipidated: S-palmitoyl cysteine.

This sequence belongs to the G-protein coupled receptor 1 family. In terms of assembly, homodimer. Interacts with corticotropin (ACTH). Interacts with MRAP; this interaction targets MC2R to the plasma membrane. Interacts with MRAP2; competing with MRAP for binding to MC2R and impairing the binding of corticotropin (ACTH). Ubiquitinated by MGRN1 that may be involved in post-endocytic trafficking and/or degradation of internalized receptor. Expressed in skin and adrenal gland tissues.

Its subcellular location is the cell membrane. Its function is as follows. Hormone receptor primarily expressed in adrenal cortex that plays a key role in regulating adrenocortical function. Upon corticotropin (ACTH) binding, facilitates the release of adrenal glucocorticoids, including cortisol and corticosterone. In addition, MC2R is required for fetal and neonatal adrenal gland development. Mechanistically, activates adenylate cyclase (cAMP), the MAPK cascade as well as the cAMP-dependent protein kinase A pathway leading to steroidogenic factor 1/NR5A1-mediated transcriptional activation. This Sus scrofa (Pig) protein is Adrenocorticotropic hormone receptor (MC2R).